A 118-amino-acid polypeptide reads, in one-letter code: Small ribosomal subunit protein uS13 (118 aa).

The interval 94–118 (GLPVHGQRTKTNARTRKGPAKSITR) is disordered.

This sequence belongs to the universal ribosomal protein uS13 family. Part of the 30S ribosomal subunit. Forms a loose heterodimer with protein S19. Forms two bridges to the 50S subunit in the 70S ribosome.

Its function is as follows. Located at the top of the head of the 30S subunit, it contacts several helices of the 16S rRNA. In the 70S ribosome it contacts the 23S rRNA (bridge B1a) and protein L5 of the 50S subunit (bridge B1b), connecting the 2 subunits; these bridges are implicated in subunit movement. Contacts the tRNAs in the A and P-sites. The sequence is that of Small ribosomal subunit protein uS13 from Acidithiobacillus ferrooxidans (strain ATCC 23270 / DSM 14882 / CIP 104768 / NCIMB 8455) (Ferrobacillus ferrooxidans (strain ATCC 23270)).